Consider the following 516-residue polypeptide: UDP-N-acetylmuramyl-tripeptide synthetase (516 aa).

Ser-36 lines the UDP-N-acetyl-alpha-D-muramoyl-L-alanyl-D-glutamate pocket. Residue 113–119 (GTKGKTT) participates in ATP binding. Residues 159-160 (TT), Ser-186, and Arg-194 contribute to the UDP-N-acetyl-alpha-D-muramoyl-L-alanyl-D-glutamate site. Lys-228 is subject to N6-carboxylysine.

The protein belongs to the MurCDEF family. MurE subfamily. In terms of processing, carboxylation is probably crucial for Mg(2+) binding and, consequently, for the gamma-phosphate positioning of ATP.

It localises to the cytoplasm. Its pathway is cell wall biogenesis; peptidoglycan biosynthesis. Its function is as follows. Catalyzes the addition of an amino acid to the nucleotide precursor UDP-N-acetylmuramoyl-L-alanyl-D-glutamate (UMAG) in the biosynthesis of bacterial cell-wall peptidoglycan. This chain is UDP-N-acetylmuramyl-tripeptide synthetase, found in Limosilactobacillus reuteri (strain DSM 20016) (Lactobacillus reuteri).